The sequence spans 559 residues: Proton-coupled zinc antiporter SLC30A9, mitochondrial (559 aa).

The segment at 58–96 is disordered; the sequence is SSDQKEDGGSKGTSAASSPEKSMAGLDPSKPEQKSTFPP. Helical transmembrane passes span 230–250, 305–325, 333–353, 389–409, and 415–435; these read VVIVAICINGLNFFFKLLAWV, GVGIFMMGAGLSWYHGIIGLL, LLWAYCILAGSLVSEGATLLV, AAAVLGLVMAASCMGLTSLTG, and SLGSLGVGTLLGAVSAFLIYT. An LXXLL motif motif is present at residues 453-457; that stretch reads LTELL.

The protein belongs to the cation diffusion facilitator (CDF) transporter (TC 2.A.4) family. SLC30A subfamily.

It localises to the mitochondrion membrane. The protein localises to the nucleus. The protein resides in the endoplasmic reticulum. The catalysed reaction is Zn(2+)(in) + 2 H(+)(out) = Zn(2+)(out) + 2 H(+)(in). Functionally, mitochondrial proton-coupled zinc ion antiporter mediating the export of zinc from the mitochondria and involved in zinc homeostasis, zinc mobilization as well as mitochondrial morphology and health. In nucleus, may function as a secondary coactivator for nuclear receptors. The polypeptide is Proton-coupled zinc antiporter SLC30A9, mitochondrial (slc30a9) (Xenopus laevis (African clawed frog)).